We begin with the raw amino-acid sequence, 175 residues long: Inorganic pyrophosphatase (175 aa).

Substrate-binding residues include Lys-30, Arg-44, and Tyr-56. Asp-66, Asp-71, and Asp-103 together coordinate Mg(2+). Residue Tyr-142 coordinates substrate.

Belongs to the PPase family. In terms of assembly, homohexamer. Mg(2+) serves as cofactor.

Its subcellular location is the cytoplasm. The catalysed reaction is diphosphate + H2O = 2 phosphate + H(+). Functionally, catalyzes the hydrolysis of inorganic pyrophosphate (PPi) forming two phosphate ions. In Haemophilus ducreyi (strain 35000HP / ATCC 700724), this protein is Inorganic pyrophosphatase.